Consider the following 356-residue polypeptide: MTRPIQASLDLQALKQNLSIVRQAATHARVWSVVKANAYGHGIERIWSAIGATDGFALLNLEEAITLRERGWKGPILMLEGFFHAQDLEIYDQHRLTTCVHSNWQLKALQNARLKAPLDIYLKVNSGMNRLGFQPDRVLTVWQQLRAMANVGEMTLMSHFAEAEHPDGISGAMARIEQAAEGLECRRSLSNSAATLWHPEAHFDWVRPGIILYGASPSGQWRDIANTGLRPVMTLSSEIIGVQTLKAGERVGYGGRYTARDEQRIGIVAAGYADGYPRHAPTGTPVLVDGVRTMTVGTVSMDMLAVDLTPCPQAGIGTPVELWGKEIKIDDVAAAAGTVGYELMCALALRVPVVTV.

Residue Lys35 is the Proton acceptor; specific for D-alanine of the active site. Position 35 is an N6-(pyridoxal phosphate)lysine (Lys35). Residue Arg130 coordinates substrate. Tyr253 serves as the catalytic Proton acceptor; specific for L-alanine. Residue Met301 participates in substrate binding.

It belongs to the alanine racemase family. Pyridoxal 5'-phosphate serves as cofactor.

The enzyme catalyses L-alanine = D-alanine. Isomerizes L-alanine to D-alanine which is then oxidized to pyruvate by DadA. This chain is Alanine racemase, catabolic (dadX), found in Escherichia coli (strain K12).